We begin with the raw amino-acid sequence, 263 residues long: Sulfur carrier protein FdhD (263 aa).

Cysteine 107 (cysteine persulfide intermediate) is an active-site residue.

It belongs to the FdhD family.

The protein resides in the cytoplasm. Functionally, required for formate dehydrogenase (FDH) activity. Acts as a sulfur carrier protein that transfers sulfur from IscS to the molybdenum cofactor prior to its insertion into FDH. This chain is Sulfur carrier protein FdhD, found in Geobacillus kaustophilus (strain HTA426).